We begin with the raw amino-acid sequence, 828 residues long: Auxin response factor 2B (828 aa).

The TF-B3 DNA-binding region spans 128–230 (FCKTLTASDT…ELRVGVRRAM (103 aa)). 3 disordered regions span residues 348-397 (PDRV…GSSK), 681-703 (EQFQ…HSTR), and 791-828 (NPGT…PEDS). Over residues 360–370 (LSPPALNPLPI) the composition is skewed to pro residues. Residues 380–390 (VLPSSPDSSVL) are compositionally biased toward polar residues. The region spanning 703 to 786 (RSCTKVHKQG…RKIFIYTKDE (84 aa)) is the PB1 domain. Residues 791-806 (NPGTLNSKGEDNSSVA) are compositionally biased toward polar residues.

The protein belongs to the ARF family. In terms of assembly, homodimers and heterodimers. Expressed in root, leaf and stem. Also expressed in flower and fruit. Expressed in flower buds about three days before opening including stamen, petal and sepal with the highest in ovary.

It is found in the nucleus. Functionally, auxin response factors (ARFs) are transcriptional factors that binds specifically to the DNA sequence 5'-TGTCTC-3' found in the auxin-responsive promoter elements (AuxREs). Could act as transcriptional activator or repressor. Involved in the control of fruit ripening process. Regulates expression of a number of ripening regulators, transcription factors, and ethylene biosynthesis and signaling components. May act as a transcriptional repressor of auxin-responsive genes. The protein is Auxin response factor 2B of Solanum lycopersicum (Tomato).